The chain runs to 144 residues: Large ribosomal subunit protein uL15 (144 aa).

The interval 1-55 (MQLNELKPVAGSRFKRLRKGRGLSSGHGFTSGRGTKGQKAHGKTRLGFEGGQMPL) is disordered. Over residues 23–35 (LSSGHGFTSGRGT) the composition is skewed to gly residues.

The protein belongs to the universal ribosomal protein uL15 family. As to quaternary structure, part of the 50S ribosomal subunit.

Functionally, binds to the 23S rRNA. The chain is Large ribosomal subunit protein uL15 from Limosilactobacillus fermentum (strain NBRC 3956 / LMG 18251) (Lactobacillus fermentum).